A 131-amino-acid polypeptide reads, in one-letter code: Small ribosomal subunit protein uS9 (131 aa).

Residues 102 to 131 (AGFLTRDPRMKERRKYGLKKARKAPQFSKR) are disordered. Residues 112–131 (KERRKYGLKKARKAPQFSKR) are compositionally biased toward basic residues.

Belongs to the universal ribosomal protein uS9 family.

This Desulfitobacterium hafniense (strain DSM 10664 / DCB-2) protein is Small ribosomal subunit protein uS9.